The chain runs to 382 residues: Lipid-A-disaccharide synthase (382 aa).

Belongs to the LpxB family.

It carries out the reaction 2-N,3-O-bis[(3R)-3-hydroxytetradecanoyl]-alpha-D-glucosaminyl 1-phosphate + UDP-2-N,3-O-bis[(3R)-3-hydroxytetradecanoyl]-alpha-D-glucosamine = lipid A disaccharide (E. coli) + UDP + H(+). It catalyses the reaction a lipid X + a UDP-2-N,3-O-bis[(3R)-3-hydroxyacyl]-alpha-D-glucosamine = a lipid A disaccharide + UDP + H(+). The protein operates within glycolipid biosynthesis; lipid IV(A) biosynthesis; lipid IV(A) from (3R)-3-hydroxytetradecanoyl-[acyl-carrier-protein] and UDP-N-acetyl-alpha-D-glucosamine: step 5/6. Its function is as follows. Condensation of UDP-2,3-diacylglucosamine and 2,3-diacylglucosamine-1-phosphate to form lipid A disaccharide, a precursor of lipid A, a phosphorylated glycolipid that anchors the lipopolysaccharide to the outer membrane of the cell. The protein is Lipid-A-disaccharide synthase of Salmonella agona (strain SL483).